The primary structure comprises 133 residues: Exosome complex protein C1739.07 (133 aa).

The tract at residues 96–133 (VNPKTEAVNTSNAAISSSSSNRPKVAKDAATRIIKHHT) is disordered. Low complexity predominate over residues 102–116 (AVNTSNAAISSSSSN).

This sequence belongs to the C1D family. In terms of assembly, component of the exosome multienzyme ribonuclease complex. Interacts with cut3.

The protein localises to the cytoplasm. Its subcellular location is the nucleus. In terms of biological role, required for exosome-dependent processing of pre-rRNA and small nucleolar RNA (snRNA) precursors. Involved in processing of 35S pre-rRNA at the A0, A1 and A2 sites. The sequence is that of Exosome complex protein C1739.07 from Schizosaccharomyces pombe (strain 972 / ATCC 24843) (Fission yeast).